The primary structure comprises 496 residues: MWQIVFFTLSCDLVLAAAYNNFRKSMDSIGKKQYQVQHGSCSYTFLLPEMDNCRSSSSPYVSNAVQRDAPLEYDDSVQRLQVLENIMENNTQWLMKLENYIQDNMKKEMVEIQQNAVQNQTAVMIEIGTNLLNQTAEQTRKLTDVEAQVLNQTTRLELQLLEHSLSTNKLEKQILDQTSEINKLQDKNSFLEKKVLAMEDKHIIQLQSIKEEKDQLQVLVSKQNSIIEELEKKIVTATVNNSVLQKQQHDLMETVNNLLTMMSTSNSAKDPTVAKEEQISFRDCAEVFKSGHTTNGIYTLTFPNSTEEIKAYCDMEAGGGGWTIIQRREDGSVDFQRTWKEYKVGFGNPSGEYWLGNEFVSQLTNQQRYVLKIHLKDWEGNEAYSLYEHFYLSSEELNYRIHLKGLTGTAGKISSISQPGNDFSTKDGDNDKCICKCSQMLTGGWWFDACGPSNLNGMYYPQRQNTNKFNGIKWYYWKGSGYSLKATTMMIRPADF.

A signal peptide spans 1 to 18 (MWQIVFFTLSCDLVLAAA). 6 N-linked (GlcNAc...) asparagine glycosylation sites follow: Asn89, Asn119, Asn133, Asn151, Asn240, and Asn304. Residues 166-248 (STNKLEKQIL…VNNSVLQKQQ (83 aa)) are a coiled coil. The region spanning 275 to 495 (KEEQISFRDC…ATTMMIRPAD (221 aa)) is the Fibrinogen C-terminal domain. Cys284 and Cys313 are joined by a disulfide. Ca(2+) is bound by residues Asp429, Asp431, Cys433, and Cys435. 2 disulfides stabilise this stretch: Cys433-Cys435 and Cys437-Cys450.

In terms of assembly, interacts with TEK/TIE2, competing for the same binding site as ANGPT1. Interacts with ITGA5. Interacts with SVEP1/polydom. Interacts with THBD; this interaction significantly inhibits the generation of activated PC and TAFIa/CPB2 by the thrombin/thrombomodulin complex.

The protein localises to the secreted. Binds to TEK/TIE2, competing for the ANGPT1 binding site, and modulating ANGPT1 signaling. Can induce tyrosine phosphorylation of TEK/TIE2 in the absence of ANGPT1. In the absence of angiogenic inducers, such as VEGF, ANGPT2-mediated loosening of cell-matrix contacts may induce endothelial cell apoptosis with consequent vascular regression. In concert with VEGF, it may facilitate endothelial cell migration and proliferation, thus serving as a permissive angiogenic signal. Involved in the regulation of lymphangiogenesis. In Homo sapiens (Human), this protein is Angiopoietin-2 (ANGPT2).